A 108-amino-acid chain; its full sequence is Tubulin-specific chaperone A (108 aa).

N-acetylalanine is present on alanine 2.

This sequence belongs to the TBCA family. In terms of assembly, supercomplex made of cofactors A to E. Cofactors A and D function by capturing and stabilizing tubulin in a quasi-native conformation. Cofactor E binds to the cofactor D-tubulin complex; interaction with cofactor C then causes the release of tubulin polypeptides that are committed to the native state. Widely expressed, but is most abundant in the testis.

It is found in the cytoplasm. It localises to the cytoskeleton. Functionally, tubulin-folding protein; involved in the early step of the tubulin folding pathway. The polypeptide is Tubulin-specific chaperone A (TBCA) (Bos taurus (Bovine)).